Consider the following 353-residue polypeptide: Peptide chain release factor 1 (353 aa).

Residue Q230 is modified to N5-methylglutamine.

It belongs to the prokaryotic/mitochondrial release factor family. Post-translationally, methylated by PrmC. Methylation increases the termination efficiency of RF1.

The protein localises to the cytoplasm. Functionally, peptide chain release factor 1 directs the termination of translation in response to the peptide chain termination codons UAG and UAA. The chain is Peptide chain release factor 1 from Leptospira biflexa serovar Patoc (strain Patoc 1 / ATCC 23582 / Paris).